The primary structure comprises 577 residues: Proline--tRNA ligase (577 aa).

The protein belongs to the class-II aminoacyl-tRNA synthetase family. ProS type 1 subfamily. As to quaternary structure, homodimer.

The protein resides in the cytoplasm. The catalysed reaction is tRNA(Pro) + L-proline + ATP = L-prolyl-tRNA(Pro) + AMP + diphosphate. Its function is as follows. Catalyzes the attachment of proline to tRNA(Pro) in a two-step reaction: proline is first activated by ATP to form Pro-AMP and then transferred to the acceptor end of tRNA(Pro). As ProRS can inadvertently accommodate and process non-cognate amino acids such as alanine and cysteine, to avoid such errors it has two additional distinct editing activities against alanine. One activity is designated as 'pretransfer' editing and involves the tRNA(Pro)-independent hydrolysis of activated Ala-AMP. The other activity is designated 'posttransfer' editing and involves deacylation of mischarged Ala-tRNA(Pro). The misacylated Cys-tRNA(Pro) is not edited by ProRS. In Marinobacter nauticus (strain ATCC 700491 / DSM 11845 / VT8) (Marinobacter aquaeolei), this protein is Proline--tRNA ligase.